Consider the following 93-residue polypeptide: Microcin N immunity protein (93 aa).

A run of 3 helical transmembrane segments spans residues 3-23, 36-56, and 68-88; these read FLNF…FIVW, LSII…NYKI, and LFCF…YFIL.

This sequence belongs to the MceB microcin immunity protein family.

The protein localises to the cell inner membrane. Its function is as follows. Probably able to protect the producing cell against microcin N (microcin 24). The sequence is that of Microcin N immunity protein from Escherichia coli.